Here is a 141-residue protein sequence, read N- to C-terminus: D-aminoacyl-tRNA deacylase (141 aa).

Positions 133–134 (GP) match the Gly-cisPro motif, important for rejection of L-amino acids motif.

Belongs to the DTD family. Homodimer.

The protein localises to the cytoplasm. It catalyses the reaction glycyl-tRNA(Ala) + H2O = tRNA(Ala) + glycine + H(+). It carries out the reaction a D-aminoacyl-tRNA + H2O = a tRNA + a D-alpha-amino acid + H(+). An aminoacyl-tRNA editing enzyme that deacylates mischarged D-aminoacyl-tRNAs. Also deacylates mischarged glycyl-tRNA(Ala), protecting cells against glycine mischarging by AlaRS. Acts via tRNA-based rather than protein-based catalysis; rejects L-amino acids rather than detecting D-amino acids in the active site. By recycling D-aminoacyl-tRNA to D-amino acids and free tRNA molecules, this enzyme counteracts the toxicity associated with the formation of D-aminoacyl-tRNA entities in vivo and helps enforce protein L-homochirality. The polypeptide is D-aminoacyl-tRNA deacylase (Streptomyces coelicolor (strain ATCC BAA-471 / A3(2) / M145)).